We begin with the raw amino-acid sequence, 100 residues long: uncharacterized protein (100 aa).

Positions 1–17 (MTMKYFCSVMIAIALVG) are cleaved as a signal peptide. Cys18 carries N-palmitoyl cysteine lipidation. The S-diacylglycerol cysteine moiety is linked to residue Cys18.

The protein localises to the cell membrane. This is an uncharacterized protein from Salmonella paratyphi A (strain ATCC 9150 / SARB42).